A 315-amino-acid chain; its full sequence is Biotin synthase (315 aa).

The Radical SAM core domain occupies 39–266 (NSLQFATLLS…KSAIRLTAGR (228 aa)). 3 residues coordinate [4Fe-4S] cluster: C54, C58, and C61. 4 residues coordinate [2Fe-2S] cluster: C98, C129, C189, and R261.

It belongs to the radical SAM superfamily. Biotin synthase family. Homodimer. It depends on [4Fe-4S] cluster as a cofactor. [2Fe-2S] cluster is required as a cofactor.

The catalysed reaction is (4R,5S)-dethiobiotin + (sulfur carrier)-SH + 2 reduced [2Fe-2S]-[ferredoxin] + 2 S-adenosyl-L-methionine = (sulfur carrier)-H + biotin + 2 5'-deoxyadenosine + 2 L-methionine + 2 oxidized [2Fe-2S]-[ferredoxin]. It functions in the pathway cofactor biosynthesis; biotin biosynthesis; biotin from 7,8-diaminononanoate: step 2/2. Catalyzes the conversion of dethiobiotin (DTB) to biotin by the insertion of a sulfur atom into dethiobiotin via a radical-based mechanism. In Legionella pneumophila (strain Lens), this protein is Biotin synthase.